The primary structure comprises 442 residues: Probable serine/threonine-protein kinase kinase DDB_G0280643 (442 aa).

The Protein kinase domain maps to 74–398; the sequence is IDPNTIVDCG…VNEILESPYF (325 aa). ATP contacts are provided by residues 80–88 and K103; that span reads VDCGTNGIM. D231 serves as the catalytic Proton acceptor.

This sequence belongs to the protein kinase superfamily. CMGC Ser/Thr protein kinase family. MAP kinase subfamily.

It catalyses the reaction L-seryl-[protein] + ATP = O-phospho-L-seryl-[protein] + ADP + H(+). The catalysed reaction is L-threonyl-[protein] + ATP = O-phospho-L-threonyl-[protein] + ADP + H(+). The polypeptide is Probable serine/threonine-protein kinase kinase DDB_G0280643 (Dictyostelium discoideum (Social amoeba)).